Here is a 152-residue protein sequence, read N- to C-terminus: 3-dehydroquinate dehydratase (152 aa).

Tyr23 functions as the Proton acceptor in the catalytic mechanism. Substrate is bound by residues Asn75, His81, and Asp88. His101 serves as the catalytic Proton donor. Substrate is bound by residues 102-103 and Arg112; that span reads IS.

It belongs to the type-II 3-dehydroquinase family. As to quaternary structure, homododecamer.

It catalyses the reaction 3-dehydroquinate = 3-dehydroshikimate + H2O. It functions in the pathway metabolic intermediate biosynthesis; chorismate biosynthesis; chorismate from D-erythrose 4-phosphate and phosphoenolpyruvate: step 3/7. Its function is as follows. Catalyzes a trans-dehydration via an enolate intermediate. This chain is 3-dehydroquinate dehydratase, found in Alkalilimnicola ehrlichii (strain ATCC BAA-1101 / DSM 17681 / MLHE-1).